Reading from the N-terminus, the 545-residue chain is Threonine--tRNA ligase catalytic subunit (545 aa).

Residues 139–433 are catalytic; the sequence is DHRLIGEKLD…LLEHFKGKLP (295 aa). Zn(2+)-binding residues include Cys-231, His-282, and His-410.

This sequence belongs to the class-II aminoacyl-tRNA synthetase family. As to quaternary structure, homodimer. Probably interacts with its editing subunit. Zn(2+) serves as cofactor.

It is found in the cytoplasm. It catalyses the reaction tRNA(Thr) + L-threonine + ATP = L-threonyl-tRNA(Thr) + AMP + diphosphate + H(+). Catalyzes the attachment of threonine to tRNA(Thr) in a two-step reaction: L-threonine is first activated by ATP to form Thr-AMP and then transferred to the acceptor end of tRNA(Thr). Also activates L-serine and transfers it to tRNA(Thr) but cannot deacylate incorrectly charged amino acid; unlike most archaea the editing function is found in a freestanding protein. The protein is Threonine--tRNA ligase catalytic subunit of Saccharolobus islandicus (strain M.16.27) (Sulfolobus islandicus).